Consider the following 77-residue polypeptide: Large ribosomal subunit protein bL28 (77 aa).

Belongs to the bacterial ribosomal protein bL28 family.

This is Large ribosomal subunit protein bL28 from Albidiferax ferrireducens (strain ATCC BAA-621 / DSM 15236 / T118) (Rhodoferax ferrireducens).